Reading from the N-terminus, the 116-residue chain is Ribonuclease P protein component (116 aa).

This sequence belongs to the RnpA family. Consists of a catalytic RNA component (M1 or rnpB) and a protein subunit.

It carries out the reaction Endonucleolytic cleavage of RNA, removing 5'-extranucleotides from tRNA precursor.. In terms of biological role, RNaseP catalyzes the removal of the 5'-leader sequence from pre-tRNA to produce the mature 5'-terminus. It can also cleave other RNA substrates such as 4.5S RNA. The protein component plays an auxiliary but essential role in vivo by binding to the 5'-leader sequence and broadening the substrate specificity of the ribozyme. The protein is Ribonuclease P protein component of Leuconostoc citreum (strain KM20).